The chain runs to 527 residues: Light-independent protochlorophyllide reductase subunit B (527 aa).

D36 provides a ligand contact to [4Fe-4S] cluster. D292 (proton donor) is an active-site residue. 428–429 (GL) lines the substrate pocket.

Belongs to the ChlB/BchB/BchZ family. As to quaternary structure, protochlorophyllide reductase is composed of three subunits; BchL, BchN and BchB. Forms a heterotetramer of two BchB and two BchN subunits. [4Fe-4S] cluster serves as cofactor.

It catalyses the reaction chlorophyllide a + oxidized 2[4Fe-4S]-[ferredoxin] + 2 ADP + 2 phosphate = protochlorophyllide a + reduced 2[4Fe-4S]-[ferredoxin] + 2 ATP + 2 H2O. It participates in porphyrin-containing compound metabolism; bacteriochlorophyll biosynthesis (light-independent). Its function is as follows. Component of the dark-operative protochlorophyllide reductase (DPOR) that uses Mg-ATP and reduced ferredoxin to reduce ring D of protochlorophyllide (Pchlide) to form chlorophyllide a (Chlide). This reaction is light-independent. The NB-protein (BchN-BchB) is the catalytic component of the complex. In Chlorobium phaeovibrioides (strain DSM 265 / 1930) (Prosthecochloris vibrioformis (strain DSM 265)), this protein is Light-independent protochlorophyllide reductase subunit B.